The sequence spans 718 residues: Phenylalanine--tRNA ligase beta subunit (718 aa).

The 115-residue stretch at 39-153 (LNEISGIKFG…IFDLESNPLK (115 aa)) folds into the tRNA-binding domain. Positions 386 to 460 (SKKTFLDLNY…RFYGLEKLKD (75 aa)) constitute a B5 domain. Mg(2+)-binding residues include aspartate 438, aspartate 444, and aspartate 448.

This sequence belongs to the phenylalanyl-tRNA synthetase beta subunit family. Type 1 subfamily. As to quaternary structure, tetramer of two alpha and two beta subunits. Mg(2+) is required as a cofactor.

Its subcellular location is the cytoplasm. The enzyme catalyses tRNA(Phe) + L-phenylalanine + ATP = L-phenylalanyl-tRNA(Phe) + AMP + diphosphate + H(+). The polypeptide is Phenylalanine--tRNA ligase beta subunit (Mesomycoplasma hyopneumoniae (strain 7448) (Mycoplasma hyopneumoniae)).